The sequence spans 221 residues: Thiamine-phosphate synthase (221 aa).

4-amino-2-methyl-5-(diphosphooxymethyl)pyrimidine is bound by residues 44 to 48 (QFREK) and Asn79. Residues Asp80 and Asp99 each coordinate Mg(2+). 4-amino-2-methyl-5-(diphosphooxymethyl)pyrimidine is bound at residue Ser117. 143–145 (TSS) provides a ligand contact to 2-[(2R,5Z)-2-carboxy-4-methylthiazol-5(2H)-ylidene]ethyl phosphate. A 4-amino-2-methyl-5-(diphosphooxymethyl)pyrimidine-binding site is contributed by Lys146. 2-[(2R,5Z)-2-carboxy-4-methylthiazol-5(2H)-ylidene]ethyl phosphate is bound by residues Gly175 and 195 to 196 (IS).

It belongs to the thiamine-phosphate synthase family. The cofactor is Mg(2+).

The enzyme catalyses 2-[(2R,5Z)-2-carboxy-4-methylthiazol-5(2H)-ylidene]ethyl phosphate + 4-amino-2-methyl-5-(diphosphooxymethyl)pyrimidine + 2 H(+) = thiamine phosphate + CO2 + diphosphate. It carries out the reaction 2-(2-carboxy-4-methylthiazol-5-yl)ethyl phosphate + 4-amino-2-methyl-5-(diphosphooxymethyl)pyrimidine + 2 H(+) = thiamine phosphate + CO2 + diphosphate. The catalysed reaction is 4-methyl-5-(2-phosphooxyethyl)-thiazole + 4-amino-2-methyl-5-(diphosphooxymethyl)pyrimidine + H(+) = thiamine phosphate + diphosphate. It participates in cofactor biosynthesis; thiamine diphosphate biosynthesis; thiamine phosphate from 4-amino-2-methyl-5-diphosphomethylpyrimidine and 4-methyl-5-(2-phosphoethyl)-thiazole: step 1/1. Its function is as follows. Condenses 4-methyl-5-(beta-hydroxyethyl)thiazole monophosphate (THZ-P) and 2-methyl-4-amino-5-hydroxymethyl pyrimidine pyrophosphate (HMP-PP) to form thiamine monophosphate (TMP). The polypeptide is Thiamine-phosphate synthase (Geobacillus kaustophilus (strain HTA426)).